Consider the following 120-residue polypeptide: MRQRQERLSALIREEISEILLRRVKDPRISSFLVITEVKMSKDLRYAHIYVSVYGSEEEKKQTMQGLESAKGFIRSELGKDLRIRFVPEIFFELDDSLEKGDRILRKLKELGLEDEQDSE.

The protein belongs to the RbfA family. Monomer. Binds 30S ribosomal subunits, but not 50S ribosomal subunits or 70S ribosomes.

The protein resides in the cytoplasm. In terms of biological role, one of several proteins that assist in the late maturation steps of the functional core of the 30S ribosomal subunit. Associates with free 30S ribosomal subunits (but not with 30S subunits that are part of 70S ribosomes or polysomes). Required for efficient processing of 16S rRNA. May interact with the 5'-terminal helix region of 16S rRNA. The sequence is that of Ribosome-binding factor A from Dictyoglomus thermophilum (strain ATCC 35947 / DSM 3960 / H-6-12).